Reading from the N-terminus, the 101-residue chain is MADFLKGLPVYNESNFSRFHADSVCKASNRRPSVYLPTREYPSDQIIVTEKTNILLRYLHQQWDKKNAAKKRDQDQLEIGETSAPPRKIARTDSQEMNEDT.

A disordered region spans residues 67 to 101 (NAAKKRDQDQLEIGETSAPPRKIARTDSQEMNEDT).

Belongs to the DDA1 family. As to quaternary structure, component of numerous DCX (DDB1-CUL4-X-box) E3 ubiquitin-protein ligase complexes which consist of a core of DDB1, cullin-4 (CUL4A or CUL4B), DDA1 and RBX1.

It participates in protein modification; protein ubiquitination. In terms of biological role, functions as a component of numerous distinct DCX (DDB1-CUL4-X-box) E3 ubiquitin-protein ligase complexes which mediate the ubiquitination and subsequent proteasomal degradation of target proteins. In the DCX complexes, acts as a scaffolding subunit required to stabilize the complex. This chain is DET1- and DDB1-associated protein 1, found in Xenopus laevis (African clawed frog).